The chain runs to 214 residues: Variable small protein 1 (214 aa).

The signal sequence occupies residues 1-18 (MRKRISAIIMTLFMVFMS). A lipid anchor (N-palmitoyl cysteine) is attached at Cys19. A lipid anchor (S-diacylglycerol cysteine) is attached at Cys19.

It belongs to the variable small protein (Vsp) family.

The protein localises to the cell outer membrane. In terms of biological role, the Vlp and Vsp proteins are antigenically distinct proteins, only one vlp or vsp gene is transcriptionally active at any one time. Switching between these genes is a mechanism of host immune response evasion. The chain is Variable small protein 1 from Borrelia hermsii.